Consider the following 350-residue polypeptide: Izumo sperm-egg fusion protein 1 (350 aa).

Positions 1–21 are cleaved as a signal peptide; that stretch reads MGPHFTLLCAALAGCLLPAEG. Intrachain disulfides connect Cys-22–Cys-149, Cys-25–Cys-152, Cys-135–Cys-159, Cys-139–Cys-165, and Cys-182–Cys-233. Residues 22–292 are Extracellular-facing; the sequence is CVICDPSVVL…LQPEKMLASR (271 aa). The segment at 148-160 is important for interaction with IZUMO1R; the sequence is WCKNCKKEVHACR. Positions 167–251 constitute an Ig-like C2-type domain; that stretch reads ERNVEVPQME…PATIINFHVT (85 aa). Asn-204 is a glycosylation site (N-linked (GlcNAc...) asparagine). Residues 293-313 traverse the membrane as a helical segment; the sequence is LLGLLICGSLALITGLTFAIF. Residues 314-350 are Cytoplasmic-facing; that stretch reads RRRKVIDFIKSSLFGLGSGAAEQTQVPKEKATDSRQQ. Phosphoserine is present on Ser-325.

It belongs to the Izumo family. Monomer, homodimer; disulfide-linked and homooligomer; depending on the context. Interacts with IZUMO1R/JUNO. IZUMO1 and IZUMO1R/JUNO form a complex with 1:1 stoichiometry. In gamete recognition, IZUMO1R/JUNO first binds to monomeric IZUMO1. The weak, but specific interaction with IZUMO1R/JUNO induces IZUMO1 homodimerization. The process follows a tight binding phase where IZUMO1 bends the entire structure towards the sperm membrane side through a thiol-disulfide exchange reaction. The molecule no longer binds to IZUMO1R/JUNO and instead binds to a putative second oocyte receptor. Interacts with ACE3. Part of a oolemmal binding multimeric complex (IZUMO1 complex) composed at least of IZUMO1 and GLIPR1L1; the complex assemblage is influenced by the maturation status of the male germ cell. Interacts with GLIPR1L1. Interacts with FREY; the interaction retains IZUMO1 at the endoplasmic reticulum membrane and coordinates IZUMO1 complex assembly. Interacts with FCRL3/MAIA (via extracellular domain); the interaction replaces IZUMO1R/JUNO as IZUMO1 receptor after sperm-egg adhesion. Interacts with WDR54. Forms a complex with SPACA6 and TMEM81 on spermatocyte cell membrane. In terms of processing, N-glycosylated. Glycosylation is not essential for fusion and for proper protein trafficking in sperm. Phosphorylated. The cytoplasmic C-terminus is phosphorylated and undergoes phosphorylation changes during epididymal transit. As to expression, sperm-specific (at protein level). Detectable on sperm surface only after the acrosome reaction.

The protein localises to the cell membrane. It is found in the cytoplasmic vesicle. It localises to the secretory vesicle. The protein resides in the acrosome membrane. Functionally, essential sperm cell-surface protein required for fertilization by acting as a ligand for IZUMO1R/JUNO receptor on egg. The IZUMO1:IZUMO1R/JUNO interaction is a necessary adhesion event between sperm and egg that is required for fertilization but is not sufficient for cell fusion. The ligand-receptor interaction probably does not act as a membrane 'fusogen'. Acts a ligand for the human-specific oolemma epitope FCRL3/MAIA during fertilization. FCRL3/MAIA replaces IZUMO1R/JUNO as IZUMO1 receptor after sperm-egg adhesion, which permits species-specific gamete fusion. Plays a critical role in sperm-oolemma binding prior to plasma membrane fusion. Can mediate cell-cell fusion in cultured mammalian cells independently of its binding to IZUMO1R/JUNO. In Homo sapiens (Human), this protein is Izumo sperm-egg fusion protein 1.